The following is a 203-amino-acid chain: Large ribosomal subunit protein bL25 (203 aa).

The protein belongs to the bacterial ribosomal protein bL25 family. CTC subfamily. As to quaternary structure, part of the 50S ribosomal subunit; part of the 5S rRNA/L5/L18/L25 subcomplex. Contacts the 5S rRNA. Binds to the 5S rRNA independently of L5 and L18.

Its function is as follows. This is one of the proteins that binds to the 5S RNA in the ribosome where it forms part of the central protuberance. The sequence is that of Large ribosomal subunit protein bL25 from Xanthobacter autotrophicus (strain ATCC BAA-1158 / Py2).